The primary structure comprises 130 residues: Protein PELPK2 (130 aa).

The N-terminal stretch at 1–32 (MTLKKSFSASLLSPFLIICLIALLSVPVSVGA) is a signal peptide. A run of 13 repeats spans residues 47 to 51 (PELPK), 52 to 56 (PEMPK), 58 to 62 (PEFPK), 63 to 67 (LELPK), 69 to 73 (PEIPK), 74 to 78 (PEMPK), 80 to 84 (PEIQK), 91 to 95 (PELPK), 97 to 101 (PEFPK), 102 to 106 (FDFPK), 108 to 112 (PELPK), 113 to 117 (PEETK), and 121 to 125 (FTMPK). The 13 X 5 AA tandem repeat of P-[DEGQ]-[AEFLIV]-[QPT]-K stretch occupies residues 47–125 (PELPKPEMPK…TKVPAFTMPK (79 aa)). The span at 71–84 (IPKPEMPKLPEIQK) shows a compositional bias: basic and acidic residues. Residues 71-130 (IPKPEMPKLPEIQKPELPTFPELPKMPEFPKFDFPKLPELPKPEETKVPAFTMPKFPGSP) are disordered. The segment covering 98–117 (EFPKFDFPKLPELPKPEETK) has biased composition (basic and acidic residues).

It is found in the secreted. It localises to the cell wall. The sequence is that of Protein PELPK2 from Arabidopsis thaliana (Mouse-ear cress).